A 129-amino-acid polypeptide reads, in one-letter code: Large ribosomal subunit protein bL21 (129 aa).

The segment at 100 to 129 (DGAKPSKKAAEKKAPKAAPKKAAAKAESAE) is disordered.

This sequence belongs to the bacterial ribosomal protein bL21 family. Part of the 50S ribosomal subunit. Contacts protein L20.

Functionally, this protein binds to 23S rRNA in the presence of protein L20. This Brucella anthropi (strain ATCC 49188 / DSM 6882 / CCUG 24695 / JCM 21032 / LMG 3331 / NBRC 15819 / NCTC 12168 / Alc 37) (Ochrobactrum anthropi) protein is Large ribosomal subunit protein bL21.